Here is a 238-residue protein sequence, read N- to C-terminus: Ribonuclease PH (238 aa).

Residues arginine 86 and 124-126 (GTR) contribute to the phosphate site.

It belongs to the RNase PH family. Homohexameric ring arranged as a trimer of dimers.

The enzyme catalyses tRNA(n+1) + phosphate = tRNA(n) + a ribonucleoside 5'-diphosphate. Phosphorolytic 3'-5' exoribonuclease that plays an important role in tRNA 3'-end maturation. Removes nucleotide residues following the 3'-CCA terminus of tRNAs; can also add nucleotides to the ends of RNA molecules by using nucleoside diphosphates as substrates, but this may not be physiologically important. Probably plays a role in initiation of 16S rRNA degradation (leading to ribosome degradation) during starvation. The polypeptide is Ribonuclease PH (Geobacter metallireducens (strain ATCC 53774 / DSM 7210 / GS-15)).